The chain runs to 259 residues: Type III pantothenate kinase (259 aa).

ATP is bound at residue 6–13 (DVGNTNCT). 107–110 (GSDR) provides a ligand contact to substrate. Asp109 functions as the Proton acceptor in the catalytic mechanism. Asp129 contributes to the K(+) binding site. Residue Thr132 participates in ATP binding. Thr184 contacts substrate.

It belongs to the type III pantothenate kinase family. As to quaternary structure, homodimer. It depends on NH4(+) as a cofactor. Requires K(+) as cofactor.

It localises to the cytoplasm. It carries out the reaction (R)-pantothenate + ATP = (R)-4'-phosphopantothenate + ADP + H(+). The protein operates within cofactor biosynthesis; coenzyme A biosynthesis; CoA from (R)-pantothenate: step 1/5. Catalyzes the phosphorylation of pantothenate (Pan), the first step in CoA biosynthesis. The chain is Type III pantothenate kinase from Listeria monocytogenes serovar 1/2a (strain ATCC BAA-679 / EGD-e).